The primary structure comprises 599 residues: Elongation factor 4 (599 aa).

One can recognise a tr-type G domain in the interval 4–186; the sequence is ENIRNFSIIA…EIVTKIPPPQ (183 aa). GTP contacts are provided by residues 16 to 21 and 133 to 136; these read DHGKST and NKID.

Belongs to the TRAFAC class translation factor GTPase superfamily. Classic translation factor GTPase family. LepA subfamily.

The protein resides in the cell inner membrane. It catalyses the reaction GTP + H2O = GDP + phosphate + H(+). In terms of biological role, required for accurate and efficient protein synthesis under certain stress conditions. May act as a fidelity factor of the translation reaction, by catalyzing a one-codon backward translocation of tRNAs on improperly translocated ribosomes. Back-translocation proceeds from a post-translocation (POST) complex to a pre-translocation (PRE) complex, thus giving elongation factor G a second chance to translocate the tRNAs correctly. Binds to ribosomes in a GTP-dependent manner. The polypeptide is Elongation factor 4 (Geotalea uraniireducens (strain Rf4) (Geobacter uraniireducens)).